A 236-amino-acid polypeptide reads, in one-letter code: Truncated formate dehydrogenase 2 (236 aa).

Residues 36–37, Asp-57, 104–108, Thr-130, Asp-156, and 185–188 each bind NAD(+); these read RI, PLHKD, and HISG.

It belongs to the D-isomer specific 2-hydroxyacid dehydrogenase family. FDH subfamily.

The sequence is that of Truncated formate dehydrogenase 2 from Saccharomyces cerevisiae (strain ATCC 204508 / S288c) (Baker's yeast).